Reading from the N-terminus, the 40-residue chain is Subtilisin-like serine protease AS-E1 (40 aa).

Residues 4–40 (PWGLARISHRTTGATSYVYDDSAGEGTCSYIIDTGIY) enclose the Peptidase S8 domain. D36 (charge relay system) is an active-site residue.

It belongs to the peptidase S8 family. Homodimer.

Strongly inhibited by antipain and PMSF. Inhibited by benzamidine and aprotinin by 80% and 17% respectively. Little or no inhibition by EDTA, E-64, iodoacetic acid, leupeptin and FUT-175. Functionally, subtilisin-like serine protease. Cleaves prothrombin at 155-Arg-|-Ser-156, 45-Thr-|-Ala-46 and 316-Tyr-|-Ile-317 to produce meizothrombin(desF1)-like molecules. Degrades fibrinogen. Inhibits plasma coagulation. The sequence is that of Subtilisin-like serine protease AS-E1 from Acremonium sp.